We begin with the raw amino-acid sequence, 624 residues long: Adenine deaminase 1 (624 aa).

Belongs to the metallo-dependent hydrolases superfamily. Adenine deaminase family. Mn(2+) is required as a cofactor.

It catalyses the reaction adenine + H2O + H(+) = hypoxanthine + NH4(+). The protein is Adenine deaminase 1 of Bradyrhizobium sp. (strain ORS 278).